We begin with the raw amino-acid sequence, 225 residues long: Testis-expressed protein 30 (225 aa).

The polypeptide is Testis-expressed protein 30 (Tex30) (Mus musculus (Mouse)).